A 138-amino-acid chain; its full sequence is Small ribosomal subunit protein uS11 (138 aa).

The segment covering 1–12 has biased composition (low complexity); it reads MPPKKAAASSAK. The interval 1-28 is disordered; that stretch reads MPPKKAAASSAKKGQKTRRREKKNVPHG. A compositionally biased stretch (basic residues) spans 13–22; it reads KGQKTRRREK.

Belongs to the universal ribosomal protein uS11 family. Part of the 30S ribosomal subunit. Interacts with proteins S7 and S18. Binds to IF-3.

Its function is as follows. Located on the platform of the 30S subunit, it bridges several disparate RNA helices of the 16S rRNA. Forms part of the Shine-Dalgarno cleft in the 70S ribosome. The chain is Small ribosomal subunit protein uS11 from Mycobacterium sp. (strain JLS).